The sequence spans 441 residues: Peroxisomal multifunctional enzyme A (441 aa).

Residues 1 to 302 are 3-hydroxyacyl-CoA dehydrogenase; sequence MALNFKDKVV…VNSKPADGES (302 aa). NAD(+) contacts are provided by residues 11-35, I19, D38, 73-74, and N97; these read IVTG…AKVV and SV. S149 contributes to the substrate binding site. Y162 functions as the Proton acceptor in the catalytic mechanism. Residues 162-166 and 194-197 contribute to the NAD(+) site; these read YGSMK and AASR. An SCP2 domain is found at 331–440; it reads ASKIFTTIQG…KLGALMQGSK (110 aa). Substrate is bound at residue Q412.

Belongs to the short-chain dehydrogenases/reductases (SDR) family.

It is found in the peroxisome. The catalysed reaction is a (3S)-3-hydroxyacyl-CoA + NAD(+) = a 3-oxoacyl-CoA + NADH + H(+). It participates in lipid metabolism; fatty acid beta-oxidation. In terms of biological role, enzyme acting on the peroxisomal beta-oxidation pathway for fatty acids. Protects the cells from the increase of the harmful xenobiotic fatty acids incorporated from their diets and optimizes cellular lipid composition for proper development. This chain is Peroxisomal multifunctional enzyme A (mfeA), found in Dictyostelium discoideum (Social amoeba).